We begin with the raw amino-acid sequence, 128 residues long: Large ribosomal subunit protein bL17 (128 aa).

It belongs to the bacterial ribosomal protein bL17 family. As to quaternary structure, part of the 50S ribosomal subunit. Contacts protein L32.

This is Large ribosomal subunit protein bL17 from Pseudomonas syringae pv. syringae (strain B728a).